The sequence spans 390 residues: T-cell surface glycoprotein CD1e, membrane-associated (390 aa).

Positions 1–14 are cleaved as a signal peptide; it reads MLLLILLFFKGLVC. A propeptide spans 15-33 (removed in sCD1e); the sequence is HEKSIVGPQPLGWHHPAEA. N-linked (GlcNAc...) asparagine glycans are attached at residues asparagine 49 and asparagine 70. Cystine bridges form between cysteine 131/cysteine 194 and cysteine 234/cysteine 288. The Ig-like domain occupies 215 to 306; it reads PEVWLSRGPS…GHDIIIHWGG (92 aa). A helical membrane pass occupies residues 305–325; sequence GGYSILLILMYVAVIVTLVTL.

In terms of assembly, heterodimer with B2M (beta-2-microglobulin). The association with B2M appears to be facilitated by the presence of the propeptide. In terms of processing, mono-ubiquitinated. Post-translationally, proteolytically cleaved in endosomes to yield a soluble form.

Its subcellular location is the golgi apparatus membrane. It localises to the early endosome. The protein resides in the late endosome. It is found in the lysosome lumen. Its function is as follows. T-cell surface glycoprotein CD1e, soluble is required for the presentation of glycolipid antigens on the cell surface. The membrane-associated form is not active. This is T-cell surface glycoprotein CD1e, membrane-associated (CD1E) from Cavia porcellus (Guinea pig).